Here is a 286-residue protein sequence, read N- to C-terminus: Transmembrane protein 156 (286 aa).

At 1–4 (MTET) the chain is on the cytoplasmic side. The chain crosses the membrane as a helical span at residues 5–25 (AFLKLFVAIVITFILVLPEFF). Topologically, residues 26–214 (KTPKERTLEL…KSVTCSMKIT (189 aa)) are extracellular. 4 N-linked (GlcNAc...) asparagine glycosylation sites follow: Asn-45, Asn-54, Asn-76, and Asn-142. A helical membrane pass occupies residues 215-235 (WYVLVLFVFMLGIIFIIYKIL). Topologically, residues 236-286 (EEHRRVWRRQSHNYKSSSVLFRGHDSGKLSTLNVRVIPGYPWTIWTRDFDE) are cytoplasmic.

The protein localises to the membrane. This chain is Transmembrane protein 156 (Tmem156), found in Rattus norvegicus (Rat).